The chain runs to 123 residues: Protein Rev (123 aa).

Serine 5 and serine 8 each carry phosphoserine; by host CK2. The tract at residues 18 to 26 (IIKILYQSN) is homomultimerization. Disordered regions lie at residues 24–49 (QSNPYPSPEGSRQARRNRRRRWRARQ) and 82–123 (TLDS…GAKN). A Nuclear localization signal and RNA-binding (RRE) motif is present at residues 34 to 50 (SRQARRNRRRRWRARQR). The span at 36–49 (QARRNRRRRWRARQ) shows a compositional bias: basic residues. Positions 73 to 84 (LPLPPIERLTLD) match the Nuclear export signal and binding to XPO1 motif. The span at 97 to 112 (PQGTETGTGSPNTPEG) shows a compositional bias: polar residues.

The protein belongs to the HIV-1 REV protein family. Homomultimer; when bound to the RRE. Multimeric assembly is essential for activity and may involve XPO1. Binds to human KPNB1, XPO1, TNPO1, RANBP5 and IPO7. Interacts with the viral Integrase. Interacts with human KHDRBS1. Interacts with human NAP1; this interaction decreases Rev multimerization and stimulates its activity. Interacts with human DEAD-box helicases DDX3 and DDX24; these interactions may serve for viral RNA export to the cytoplasm and packaging, respectively. Interacts with human PSIP1; this interaction may inhibit HIV-1 DNA integration by promoting dissociation of the Integrase-LEDGF/p75 complex. Asymmetrically arginine dimethylated at one site by host PRMT6. Methylation impairs the RNA-binding activity and export of viral RNA from the nucleus to the cytoplasm. In terms of processing, phosphorylated by protein kinase CK2. Presence of, and maybe binding to the N-terminus of the regulatory beta subunit of CK2 is necessary for CK2-mediated Rev's phosphorylation.

The protein localises to the host nucleus. It localises to the host nucleolus. It is found in the host cytoplasm. Functionally, escorts unspliced or incompletely spliced viral pre-mRNAs (late transcripts) out of the nucleus of infected cells. These pre-mRNAs carry a recognition sequence called Rev responsive element (RRE) located in the env gene, that is not present in fully spliced viral mRNAs (early transcripts). This function is essential since most viral proteins are translated from unspliced or partially spliced pre-mRNAs which cannot exit the nucleus by the pathway used by fully processed cellular mRNAs. Rev itself is translated from a fully spliced mRNA that readily exits the nucleus. Rev's nuclear localization signal (NLS) binds directly to KPNB1/Importin beta-1 without previous binding to KPNA1/Importin alpha-1. KPNB1 binds to the GDP bound form of RAN (Ran-GDP) and targets Rev to the nucleus. In the nucleus, the conversion from Ran-GDP to Ran-GTP dissociates Rev from KPNB1 and allows Rev's binding to the RRE in viral pre-mRNAs. Rev multimerization on the RRE via cooperative assembly exposes its nuclear export signal (NES) to the surface. Rev can then form a complex with XPO1/CRM1 and Ran-GTP, leading to nuclear export of the complex. Conversion from Ran-GTP to Ran-GDP mediates dissociation of the Rev/RRE/XPO1/RAN complex, so that Rev can return to the nucleus for a subsequent round of export. Beside KPNB1, also seems to interact with TNPO1/Transportin-1, RANBP5/IPO5 and IPO7/RANBP7 for nuclear import. The nucleoporin-like HRB/RIP is an essential cofactor that probably indirectly interacts with Rev to release HIV RNAs from the perinuclear region to the cytoplasm. The protein is Protein Rev of Simian immunodeficiency virus (isolate MB66) (SIV-cpz).